A 46-amino-acid chain; its full sequence is Large ribosomal subunit protein bL34c (46 aa).

It belongs to the bacterial ribosomal protein bL34 family.

The protein resides in the plastid. Its subcellular location is the chloroplast. This Pyropia yezoensis (Susabi-nori) protein is Large ribosomal subunit protein bL34c.